The chain runs to 460 residues: MRVKEIQRNYQHLWKWSLIILGMIMICKAIEKSWVTVYYGVPVWKDAETTLFCASDAKAYEKESHNVWATHACVPSDPSPQELVLGNVTENFNMWKNKMVEQMHEDIISLWDQSLKPCVKLTFLCVTLNCIDVKNSTNNNTEEATITNCSFKVPTELKDKTETVHTLFYKLDVVPLNVTNNSSISSTYRLINCNTSTITQACPKVSFEPIPIHYCAPAGFAILKCNDKKFNGTGPCKNVSTVQCTHGIRPVVSTQLLLNGSLSEEEVIIRSENITNNAKTIIVQLNETVKINCTRPGSDKKIRQSIRIGPGKVFYAKGGITGQAHCNITDGEWRNTLQQVAIALRRQFNNKSIIFNSSSGGDIEITTHTFNCGGEFFYCNTSELFTGIWNGTWDKNCTSTESNCTGNITLPCRIKQVVRTWQGVGQAMYAPPIEGTIRCSSNITGLLLTRDGGNGKCNSK.

Positions 1–31 are cleaved as a signal peptide; the sequence is MRVKEIQRNYQHLWKWSLIILGMIMICKAIE. An intrachain disulfide couples Cys53 to Cys73. 14 N-linked (GlcNAc...) asparagine; by host glycosylation sites follow: Asn87, Asn135, Asn139, Asn148, Asn177, Asn180, Asn181, Asn194, Asn231, Asn238, Asn259, Asn273, Asn286, and Asn292. Intrachain disulfides connect Cys118–Cys202, Cys125–Cys193, Cys130–Cys149, Cys215–Cys244, and Cys225–Cys236. The V1 stretch occupies residues 130 to 148; that stretch reads CIDVKNSTNNNTEEATITN. A V2 region spans residues 149–193; it reads CSFKVPTELKDKTETVHTLFYKLDVVPLNVTNNSSISSTYRLINC. A V3 region spans residues 293-325; that stretch reads CTRPGSDKKIRQSIRIGPGKVFYAKGGITGQAH. An intrachain disulfide couples Cys293 to Cys326. N-linked (GlcNAc...) asparagine; by host glycans are attached at residues Asn327, Asn350, and Asn356. The segment at 358–368 is CD4-binding loop; sequence SSGGDIEITTH. Intrachain disulfides connect Cys372–Cys439, Cys379–Cys412, and Cys397–Cys404. The tract at residues 379-412 is V4; sequence CNTSELFTGIWNGTWDKNCTSTESNCTGNITLPC. Residues Asn380, Asn390, Asn396, Asn403, Asn407, and Asn442 are each glycosylated (N-linked (GlcNAc...) asparagine; by host).

It is found in the virion membrane. This Human immunodeficiency virus type 1 group M subtype U (isolate Z3) (HIV-1) protein is Truncated surface protein (env).